Here is a 431-residue protein sequence, read N- to C-terminus: UDP-N-acetylmuramate--L-alanine ligase (431 aa).

Position 108–114 (108–114) interacts with ATP; the sequence is GSHGKTS.

Belongs to the MurCDEF family.

It localises to the cytoplasm. It catalyses the reaction UDP-N-acetyl-alpha-D-muramate + L-alanine + ATP = UDP-N-acetyl-alpha-D-muramoyl-L-alanine + ADP + phosphate + H(+). It functions in the pathway cell wall biogenesis; peptidoglycan biosynthesis. Functionally, cell wall formation. The sequence is that of UDP-N-acetylmuramate--L-alanine ligase from Exiguobacterium sibiricum (strain DSM 17290 / CCUG 55495 / CIP 109462 / JCM 13490 / 255-15).